The sequence spans 283 residues: Probable endonuclease 4 (283 aa).

Residues His-69, His-109, Glu-145, Asp-179, His-182, His-216, Asp-229, His-231, and Glu-261 each contribute to the Zn(2+) site.

The protein belongs to the AP endonuclease 2 family. Zn(2+) serves as cofactor.

The enzyme catalyses Endonucleolytic cleavage to 5'-phosphooligonucleotide end-products.. Endonuclease IV plays a role in DNA repair. It cleaves phosphodiester bonds at apurinic or apyrimidinic (AP) sites, generating a 3'-hydroxyl group and a 5'-terminal sugar phosphate. This chain is Probable endonuclease 4, found in Campylobacter concisus (strain 13826).